The primary structure comprises 585 residues: Polyadenylate-binding protein, cytoplasmic and nuclear (585 aa).

The interval 14-37 (QLKIEEQTAPTTTESETPKVETSG) is disordered. RRM domains lie at 38–116 (ASLY…WSQR), 126–203 (GNIY…LHVS), 219–296 (TNVY…RAQK), and 322–399 (VNLF…IAQR). The 80-residue stretch at 488–567 (GQFPRNGQQQ…AHAAYQKFKE (80 aa)) folds into the PABC domain.

This sequence belongs to the polyadenylate-binding protein type-1 family.

Its subcellular location is the cytoplasm. It is found in the nucleus. Binds the poly(A) tail of mRNA. Appears to be an important mediator of the multiple roles of the poly(A) tail in mRNA biogenesis, stability and translation. In the nucleus, involved in both mRNA cleavage and polyadenylation. Is also required for efficient mRNA export to the cytoplasm. Acts in concert with a poly(A)-specific nuclease (PAN) to affect poly(A) tail shortening, which may occur concomitantly with either nucleocytoplasmic mRNA transport or translational initiation. In the cytoplasm, stimulates translation initiation and regulates mRNA decay through translation termination-coupled poly(A) shortening, probably mediated by PAN. This Eremothecium gossypii (strain ATCC 10895 / CBS 109.51 / FGSC 9923 / NRRL Y-1056) (Yeast) protein is Polyadenylate-binding protein, cytoplasmic and nuclear (PAB1).